The primary structure comprises 488 residues: Facilitated trehalose transporter Tret1-2 homolog (488 aa).

Residues 1-28 (MKILMRADTHVSYSVPAEGTKANFTFSQ) lie on the Cytoplasmic side of the membrane. A helical transmembrane segment spans residues 29–49 (VLAALSVSLCSLVVGFVSAYT). Residues 50–72 (SPALVSMTDRTITSFEVTKDAGS) are Extracellular-facing. A helical transmembrane segment spans residues 73–93 (WVGGIMPLAALAGGITGGPLI). At 94-105 (EYLGRRNTILAT) the chain is on the cytoplasmic side. The chain crosses the membrane as a helical span at residues 106–126 (AVPFIVSSLLIACAVNVIMIL). Residues 127–129 (CGR) lie on the Extracellular side of the membrane. A helical membrane pass occupies residues 130–150 (FLTGFCVGIASLSLPVYLGET). Residues 151–160 (LQPEVRGTLG) lie on the Cytoplasmic side of the membrane. A helical transmembrane segment spans residues 161–181 (LLPTALGNIGILVCYVAGSFM). Residue Asn182 is glycosylated (N-linked (GlcNAc...) asparagine). At 182–184 (NWS) the chain is on the extracellular side. Residues 185–205 (ILAFLGAALPVPFLILMIIIP) form a helical membrane-spanning segment. The Cytoplasmic segment spans residues 206 to 268 (ETPRWFVNRG…ELFKRINLKP (63 aa)). A helical membrane pass occupies residues 269-289 (LSISLGLMFFQQFSGINAVIF). Over 290–305 (YTVQIFKDAGSTIDSN) the chain is Extracellular. A helical transmembrane segment spans residues 306 to 326 (LCTIIVGIVNFFATFMGIILI). Topologically, residues 327 to 332 (DRLGRK) are cytoplasmic. The chain crosses the membrane as a helical span at residues 333–353 (ILLYVSDIAMILTLSILGGFF). The Extracellular portion of the chain corresponds to 354 to 372 (YCKAHGPDVSHLGWLPLSC). A helical membrane pass occupies residues 373-393 (FVIYILGFSLGFGPIPWLMMG). At 394–402 (EILPAKIRG) the chain is on the cytoplasmic side. The chain crosses the membrane as a helical span at residues 403–423 (PAASVVTAFNWFCTFVVTKTF). Residues 424–433 (QDLTVAMGPH) lie on the Extracellular side of the membrane. A helical membrane pass occupies residues 434–454 (GAFWLFGVVCIVGLFFVIIYV). Over 455–488 (PETRGKSLEEIERKMMGRVPISAVVNIKPFSFNM) the chain is Cytoplasmic.

The protein belongs to the major facilitator superfamily. Sugar transporter (TC 2.A.1.1) family. Trehalose transporter subfamily.

It localises to the cell membrane. In terms of biological role, fails to transport trehalose. This Drosophila sechellia (Fruit fly) protein is Facilitated trehalose transporter Tret1-2 homolog.